Reading from the N-terminus, the 228-residue chain is Urease accessory protein UreF 1 (228 aa).

The protein belongs to the UreF family. In terms of assembly, ureD, UreF and UreG form a complex that acts as a GTP-hydrolysis-dependent molecular chaperone, activating the urease apoprotein by helping to assemble the nickel containing metallocenter of UreC. The UreE protein probably delivers the nickel.

Its subcellular location is the cytoplasm. In terms of biological role, required for maturation of urease via the functional incorporation of the urease nickel metallocenter. In Brucella anthropi (strain ATCC 49188 / DSM 6882 / CCUG 24695 / JCM 21032 / LMG 3331 / NBRC 15819 / NCTC 12168 / Alc 37) (Ochrobactrum anthropi), this protein is Urease accessory protein UreF 1.